The primary structure comprises 146 residues: 3-dehydroquinate dehydratase (146 aa).

The active-site Proton acceptor is Y22. Residues N74, H80, and D87 each contribute to the substrate site. The active-site Proton donor is the H100. Substrate contacts are provided by residues 101–102 (LS) and R111.

It belongs to the type-II 3-dehydroquinase family. In terms of assembly, homododecamer.

It catalyses the reaction 3-dehydroquinate = 3-dehydroshikimate + H2O. It participates in metabolic intermediate biosynthesis; chorismate biosynthesis; chorismate from D-erythrose 4-phosphate and phosphoenolpyruvate: step 3/7. Functionally, catalyzes a trans-dehydration via an enolate intermediate. The polypeptide is 3-dehydroquinate dehydratase (Clostridium perfringens (strain SM101 / Type A)).